A 396-amino-acid polypeptide reads, in one-letter code: S-adenosylmethionine synthase (396 aa).

His-16 lines the ATP pocket. Asp-18 lines the Mg(2+) pocket. Glu-44 serves as a coordination point for K(+). L-methionine is bound by residues Glu-57 and Gln-100. The segment at 100–110 (QSPDINQGVDR) is flexible loop. ATP-binding positions include 165-167 (DAK), Asp-240, 246-247 (RK), Ala-263, and Lys-267. Asp-240 is a binding site for L-methionine. L-methionine is bound at residue Lys-271.

Belongs to the AdoMet synthase family. Homotetramer; dimer of dimers. Mg(2+) is required as a cofactor. Requires K(+) as cofactor.

Its subcellular location is the cytoplasm. It carries out the reaction L-methionine + ATP + H2O = S-adenosyl-L-methionine + phosphate + diphosphate. The protein operates within amino-acid biosynthesis; S-adenosyl-L-methionine biosynthesis; S-adenosyl-L-methionine from L-methionine: step 1/1. Functionally, catalyzes the formation of S-adenosylmethionine (AdoMet) from methionine and ATP. The overall synthetic reaction is composed of two sequential steps, AdoMet formation and the subsequent tripolyphosphate hydrolysis which occurs prior to release of AdoMet from the enzyme. This chain is S-adenosylmethionine synthase, found in Pseudomonas fluorescens (strain Pf0-1).